We begin with the raw amino-acid sequence, 251 residues long: Ubiquinone/menaquinone biosynthesis C-methyltransferase UbiE (251 aa).

S-adenosyl-L-methionine is bound by residues T74, D95, and 123 to 124; that span reads DA.

The protein belongs to the class I-like SAM-binding methyltransferase superfamily. MenG/UbiE family.

The catalysed reaction is a 2-demethylmenaquinol + S-adenosyl-L-methionine = a menaquinol + S-adenosyl-L-homocysteine + H(+). It carries out the reaction a 2-methoxy-6-(all-trans-polyprenyl)benzene-1,4-diol + S-adenosyl-L-methionine = a 5-methoxy-2-methyl-3-(all-trans-polyprenyl)benzene-1,4-diol + S-adenosyl-L-homocysteine + H(+). The protein operates within quinol/quinone metabolism; menaquinone biosynthesis; menaquinol from 1,4-dihydroxy-2-naphthoate: step 2/2. It participates in cofactor biosynthesis; ubiquinone biosynthesis. Functionally, methyltransferase required for the conversion of demethylmenaquinol (DMKH2) to menaquinol (MKH2) and the conversion of 2-polyprenyl-6-methoxy-1,4-benzoquinol (DDMQH2) to 2-polyprenyl-3-methyl-6-methoxy-1,4-benzoquinol (DMQH2). The protein is Ubiquinone/menaquinone biosynthesis C-methyltransferase UbiE of Idiomarina loihiensis (strain ATCC BAA-735 / DSM 15497 / L2-TR).